The following is a 1765-amino-acid chain: RANBP2-like and GRIP domain-containing protein 8 (1765 aa).

Residue T19 is modified to Phosphothreonine. S21 bears the Phosphoserine mark. TPR repeat units lie at residues 26 to 59, 60 to 93, and 648 to 681; these read SMKG…QERD, PKAH…NPTQ, and EDAH…VSYW. The interval 760–804 is disordered; that stretch reads GPLYKNGSLRNADSEIKHSTPSPTKYSLSPSKSYKYSPETPPRWT. Positions 778 to 797 are enriched in low complexity; the sequence is STPSPTKYSLSPSKSYKYSP. Residues 1036-1172 form the RanBD1 1 domain; that stretch reads HFEPVVQMPE…FEECQRLLLD (137 aa). Disordered stretches follow at residues 1216–1247 and 1306–1330; these read TEEE…PTLE and AKLN…EERD. Residues 1231–1244 are compositionally biased toward polar residues; sequence SDTTIKPNAENTGP. A compositionally biased stretch (acidic residues) spans 1317 to 1329; the sequence is TDEESVVTQEEER. In terms of domain architecture, RanBD1 2 spans 1333–1469; sequence YFEPVVPLPD…FDEAKTAQEK (137 aa). The span at 1580–1593 shows a compositional bias: polar residues; that stretch reads NNSETSSVAQSGSE. Disordered regions lie at residues 1580–1621 and 1746–1765; these read NNSE…KNLS and KGKL…RSSG. A compositionally biased stretch (basic and acidic residues) spans 1594 to 1617; the sequence is SKVEPKKCELSKNSDIEQSSDSKV. The region spanning 1702–1752 is the GRIP domain; that stretch reads REKSAANLEYLKNVLLQFIFLKPGSERERLLPVINTMLQLSPEEKGKLAAV.

Interacts with GTP-bound ARL1.

This Homo sapiens (Human) protein is RANBP2-like and GRIP domain-containing protein 8 (RGPD8).